The sequence spans 652 residues: Phosphomethylpyrimidine synthase (652 aa).

Substrate-binding positions include Asn235, Met264, Tyr293, His329, 349-351 (SRG), 390-393 (DGMR), and Glu429. Residue His433 coordinates Zn(2+). Tyr456 provides a ligand contact to substrate. His497 contributes to the Zn(2+) binding site. Cys577, Cys580, and Cys585 together coordinate [4Fe-4S] cluster.

Belongs to the ThiC family. As to quaternary structure, homodimer. It depends on [4Fe-4S] cluster as a cofactor.

The catalysed reaction is 5-amino-1-(5-phospho-beta-D-ribosyl)imidazole + S-adenosyl-L-methionine = 4-amino-2-methyl-5-(phosphooxymethyl)pyrimidine + CO + 5'-deoxyadenosine + formate + L-methionine + 3 H(+). The protein operates within cofactor biosynthesis; thiamine diphosphate biosynthesis. Its function is as follows. Catalyzes the synthesis of the hydroxymethylpyrimidine phosphate (HMP-P) moiety of thiamine from aminoimidazole ribotide (AIR) in a radical S-adenosyl-L-methionine (SAM)-dependent reaction. The protein is Phosphomethylpyrimidine synthase of Shewanella sediminis (strain HAW-EB3).